A 399-amino-acid polypeptide reads, in one-letter code: MKVLVLNSGSSSLKYQFIDTDTEVALCKGVVDRIGLPGAFIRHQKNGQEIVKEQEINDHNVAIKLVLEMLTHEEAGIIHSMDEIDAIGHRVVHGGEYFSDAVIVNEEVKKAIRECIELAPLHNPANLMGIEACEKEIPGKPNVAVFDTAFHQTMPRYAYMYSLPYEVYEKYKIRKYGFHGTSHKYVAIKAAEYLRRPLEELKLITCHLGNGSSVCAIKYGKSVDTSMGFTPLAGLAMGTRSGTIDPAVILYLMEKEKMDVKQMNDFLNKKSGVLGISGVSSDFRDLEKAANEGNERAQLAIDMFCYRVKKYIGEYAAVLGGVDAIIFTAGIGENNALVRDKCLTDLEYMGVLYDRERNFNVEKGKVFEINKPESKVKVLIVPTNEELMIARETKRLLSK.

Asparagine 7 provides a ligand contact to Mg(2+). Lysine 14 provides a ligand contact to ATP. Arginine 90 serves as a coordination point for substrate. Aspartate 147 (proton donor/acceptor) is an active-site residue. Residues 207–211 (HLGNG), 282–284 (DFR), and 330–334 (GIGEN) each bind ATP. Glutamate 385 provides a ligand contact to Mg(2+).

This sequence belongs to the acetokinase family. Homodimer. Requires Mg(2+) as cofactor. Mn(2+) serves as cofactor.

The protein resides in the cytoplasm. The catalysed reaction is acetate + ATP = acetyl phosphate + ADP. The protein operates within metabolic intermediate biosynthesis; acetyl-CoA biosynthesis; acetyl-CoA from acetate: step 1/2. Functionally, catalyzes the formation of acetyl phosphate from acetate and ATP. Can also catalyze the reverse reaction. The chain is Acetate kinase from Caldicellulosiruptor bescii (strain ATCC BAA-1888 / DSM 6725 / KCTC 15123 / Z-1320) (Anaerocellum thermophilum).